The chain runs to 36 residues: Glycine-rich protein GWK (36 aa).

The segment at 1–36 is disordered; sequence YKRGGGGWGGGGGWKGGGGGGGGWKGGGGGGKGGGG.

Possesses antifungal activity against a number of phytopathogenic fungi, including H.sativum and F.culmorum. The sequence is that of Glycine-rich protein GWK from Cucumis melo (Muskmelon).